A 261-amino-acid polypeptide reads, in one-letter code: Short-chain dehydrogenase/reductase AFUA_1G00990 (261 aa).

NADP(+) is bound by residues Leu-19, Asp-67, Asn-94, Tyr-169, Lys-173, and Thr-213. The Proton donor role is filled by Tyr-169. Lys-173 serves as the catalytic Lowers pKa of active site Tyr.

This sequence belongs to the short-chain dehydrogenases/reductases (SDR) family.

In terms of biological role, short-chain dehydrogenase/reductase; part of the gene cluster that mediates the biosynthesis of fumigermin that inhibits germination of spores of the inducing S.rapamycinicus, and thus helps the fungus to defend resources in the shared habitat against a bacterial competitor. The partially reducing polyketide synthase fngA alone is sufficient for the production of fumigermin. FgnA catalyzes the condensation of 3 malonyl-CoA units to an acetyl-CoA starter, and 3 methylations to yield fumigermin. It is remarkable that the five cluster genes including fgnA are conserved in distantly related fungi, supporting the assumption of a fumigermin cluster; it is thus possible that originally all five genes were functional, but that the genes encoding tailoring enzymes became inactive from mutations, similar to the case of the fgnA gene in strains A1163 and Af293. The polypeptide is Short-chain dehydrogenase/reductase AFUA_1G00990 (Aspergillus fumigatus (strain ATCC MYA-4609 / CBS 101355 / FGSC A1100 / Af293) (Neosartorya fumigata)).